The chain runs to 310 residues: tRNA uridine(34) hydroxylase (310 aa).

The region spanning S124–S218 is the Rhodanese domain. C178 serves as the catalytic Cysteine persulfide intermediate.

The protein belongs to the TrhO family.

It carries out the reaction uridine(34) in tRNA + AH2 + O2 = 5-hydroxyuridine(34) in tRNA + A + H2O. Functionally, catalyzes oxygen-dependent 5-hydroxyuridine (ho5U) modification at position 34 in tRNAs. This is tRNA uridine(34) hydroxylase from Pseudomonas putida (strain GB-1).